A 115-amino-acid chain; its full sequence is T cell receptor beta variable 2 (115 aa).

The first 19 residues, 1 to 19, serve as a signal peptide directing secretion; it reads MDTWLVCWAIFSLLKAGLT. Residues 21-115 enclose the Ig-like domain; sequence PEVTQTPSHQ…SAMYFCASSE (95 aa). Residues Cys-42 and Cys-111 are joined by a disulfide bond. N-linked (GlcNAc...) asparagine glycosylation is present at Asn-93.

As to quaternary structure, alpha-beta TR is a heterodimer composed of an alpha and beta chain; disulfide-linked. The alpha-beta TR is associated with the transmembrane signaling CD3 coreceptor proteins to form the TR-CD3 (TcR or TCR). The assembly of alpha-beta TR heterodimers with CD3 occurs in the endoplasmic reticulum where a single alpha-beta TR heterodimer associates with one CD3D-CD3E heterodimer, one CD3G-CD3E heterodimer and one CD247 homodimer forming a stable octameric structure. CD3D-CD3E and CD3G-CD3E heterodimers preferentially associate with TR alpha and TR beta chains, respectively. The association of the CD247 homodimer is the last step of TcR assembly in the endoplasmic reticulum and is required for transport to the cell surface.

The protein resides in the cell membrane. V region of the variable domain of T cell receptor (TR) beta chain that participates in the antigen recognition. Alpha-beta T cell receptors are antigen specific receptors which are essential to the immune response and are present on the cell surface of T lymphocytes. Recognize peptide-major histocompatibility (MH) (pMH) complexes that are displayed by antigen presenting cells (APC), a prerequisite for efficient T cell adaptive immunity against pathogens. Binding of alpha-beta TR to pMH complex initiates TR-CD3 clustering on the cell surface and intracellular activation of LCK that phosphorylates the ITAM motifs of CD3G, CD3D, CD3E and CD247 enabling the recruitment of ZAP70. In turn ZAP70 phosphorylates LAT, which recruits numerous signaling molecules to form the LAT signalosome. The LAT signalosome propagates signal branching to three major signaling pathways, the calcium, the mitogen-activated protein kinase (MAPK) kinase and the nuclear factor NF-kappa-B (NF-kB) pathways, leading to the mobilization of transcription factors that are critical for gene expression and essential for T cell growth and differentiation. The T cell repertoire is generated in the thymus, by V-(D)-J rearrangement. This repertoire is then shaped by intrathymic selection events to generate a peripheral T cell pool of self-MH restricted, non-autoaggressive T cells. Post-thymic interaction of alpha-beta TR with the pMH complexes shapes TR structural and functional avidity. The chain is T cell receptor beta variable 2 from Homo sapiens (Human).